The chain runs to 419 residues: tRNA (guanine-N(7)-)-methyltransferase non-catalytic subunit wuho (419 aa).

Low complexity predominate over residues 51–61 (STAEQQSAAAE). A disordered region spans residues 51–75 (STAEQQSAAAETGGGSVVEGEEPKD). WD repeat units lie at residues 87–127 (APTV…AQLV), 174–213 (GHLSIVYDILWTGDQQHIITSDRDDKIRVTNYPATFDIHS), and 217–255 (GHKEFVSGLALLSDEHICSVSGDKTLRVWNFKAGKELLR).

Belongs to the WD repeat TRM82 family. As to quaternary structure, forms a heterodimer with the catalytic subunit Mettl1. Interacts with mei-P26 and weakly interacts with bgcn; required for the function or formation of the mei-P26-bgcn-bam-sxl complex. Interacts with nanos; may be involved in mei-P26-dependent derepression of the BMP signaling pathway. Interacts with Myc; the interaction may be mediated by mei-P26 and may be involved in the regulation of ribosome biogenesis. As to expression, in testis, it is present at high level in hub cells, a niche for germline stem cells of testis. Ubiquitously expressed in all testicular cells throughout spermatogenesis. Ubiquitously expressed in all germline and somatic cells of the ovary.

The protein localises to the nucleus. It localises to the cytoplasm. It participates in tRNA modification; N(7)-methylguanine-tRNA biosynthesis. Required for the Mettl1-dependent formation of N(7)-methylguanine at position 46 (m7G46) in tRNA. In the Mettl1-wuho methyltransferase complex, it is required to stabilize and induce conformational changes of the catalytic subunit. Required for binding of nanos mRNA and repression of translation by the mei-P26-bgcn-bam-sxl complex. May cooperate with mei-P26 and nanos to derepress the BMP signaling pathway. May cooperate with mei-P26 to suppress expression of a subset of microRNAs. May cooperate with mei-P26 to regulate bam expression levels in germline cells during gametogenesis. Required to promote mitosis to meiosis transition during gametogenesis. May regulate germline cell division in part by regulating ribosome biogenesis. This chain is tRNA (guanine-N(7)-)-methyltransferase non-catalytic subunit wuho, found in Drosophila willistoni (Fruit fly).